The sequence spans 78 residues: Small ribosomal subunit protein bS18 (78 aa).

The protein belongs to the bacterial ribosomal protein bS18 family. Part of the 30S ribosomal subunit. Forms a tight heterodimer with protein bS6.

In terms of biological role, binds as a heterodimer with protein bS6 to the central domain of the 16S rRNA, where it helps stabilize the platform of the 30S subunit. This chain is Small ribosomal subunit protein bS18, found in Lactobacillus delbrueckii subsp. bulgaricus (strain ATCC 11842 / DSM 20081 / BCRC 10696 / JCM 1002 / NBRC 13953 / NCIMB 11778 / NCTC 12712 / WDCM 00102 / Lb 14).